Reading from the N-terminus, the 819-residue chain is Leucine--tRNA ligase (819 aa).

Residues 40-51 (PYPSGAGLHVGH) carry the 'HIGH' region motif. The 'KMSKS' region signature appears at 600–604 (KMSKS). Residue lysine 603 coordinates ATP.

Belongs to the class-I aminoacyl-tRNA synthetase family.

The protein localises to the cytoplasm. The catalysed reaction is tRNA(Leu) + L-leucine + ATP = L-leucyl-tRNA(Leu) + AMP + diphosphate. The chain is Leucine--tRNA ligase from Chlamydia trachomatis serovar L2 (strain ATCC VR-902B / DSM 19102 / 434/Bu).